A 193-amino-acid chain; its full sequence is Large ribosomal subunit protein bL21 (193 aa).

It belongs to the bacterial ribosomal protein bL21 family. Part of the 50S ribosomal subunit. Contacts protein L20.

This protein binds to 23S rRNA in the presence of protein L20. The chain is Large ribosomal subunit protein bL21 from Ruegeria pomeroyi (strain ATCC 700808 / DSM 15171 / DSS-3) (Silicibacter pomeroyi).